Here is a 300-residue protein sequence, read N- to C-terminus: Nucleotide-binding protein MCCL_0516 (300 aa).

15 to 22 (GMSGAGKS) serves as a coordination point for ATP. 66–69 (DLRG) is a GTP binding site.

Belongs to the RapZ-like family.

In terms of biological role, displays ATPase and GTPase activities. In Macrococcus caseolyticus (strain JCSC5402) (Macrococcoides caseolyticum), this protein is Nucleotide-binding protein MCCL_0516.